The following is a 123-amino-acid chain: Small ribosomal subunit protein uS12 (123 aa).

D89 carries the post-translational modification 3-methylthioaspartic acid.

Belongs to the universal ribosomal protein uS12 family. In terms of assembly, part of the 30S ribosomal subunit. Contacts proteins S8 and S17. May interact with IF1 in the 30S initiation complex.

In terms of biological role, with S4 and S5 plays an important role in translational accuracy. Its function is as follows. Interacts with and stabilizes bases of the 16S rRNA that are involved in tRNA selection in the A site and with the mRNA backbone. Located at the interface of the 30S and 50S subunits, it traverses the body of the 30S subunit contacting proteins on the other side and probably holding the rRNA structure together. The combined cluster of proteins S8, S12 and S17 appears to hold together the shoulder and platform of the 30S subunit. The protein is Small ribosomal subunit protein uS12 of Rhodospirillum centenum (strain ATCC 51521 / SW).